The chain runs to 1103 residues: Platelet-derived growth factor receptor beta (1103 aa).

Positions 1 to 31 (MQVPGTMPAPVLKGQALWLPLLLMLSPQASG) are cleaved as a signal peptide. Ig-like C2-type domains follow at residues 33–120 (LVIT…YIFV), 129–210 (PVDP…YSLQ), 214–309 (INVS…INVT), 331–403 (HRSR…HEDA), and 416–524 (PVRV…VTVV). Over 33-532 (LVITPPGPEL…VVPHSLPFKV (500 aa)) the chain is Extracellular. N-linked (GlcNAc...) asparagine glycans are attached at residues N45 and N89. Intrachain disulfides connect C54–C100 and C149–C190. N-linked (GlcNAc...) asparagine glycosylation is found at N215 and N230. A disulfide bridge connects residues C235 and C291. N-linked (GlcNAc...) asparagine glycans are attached at residues N292, N307, N354, N371, N468, and N479. A disulfide bridge links C436 with C508. The chain crosses the membrane as a helical span at residues 533–553 (VVISAILALVVLTIISLIILI). Over 554–1103 (MLWQKKPRYE…PRAEAEDSFL (550 aa)) the chain is Cytoplasmic. Phosphotyrosine; by autocatalysis occurs at positions 562, 579, and 581. One can recognise a Protein kinase domain in the interval 600 to 962 (LVLGRTLGSG…QLVLLLERLL (363 aa)). ATP contacts are provided by residues 606-614 (LGSGAFGQV) and K634. The residue at position 686 (Y686) is a Phosphotyrosine; by ABL1 and ABL2. A phosphotyrosine; by autocatalysis mark is found at Y716, Y740, Y751, Y763, Y771, Y775, and Y778. D826 (proton acceptor) is an active-site residue. Residue Y857 is modified to Phosphotyrosine; by autocatalysis. Residues Y934 and Y970 each carry the phosphotyrosine; by ABL1 and ABL2 modification. Phosphotyrosine; by autocatalysis occurs at positions 1009 and 1021. Residues 1017–1103 (GDNDYIIPLP…PRAEAEDSFL (87 aa)) are disordered. Residues 1039–1059 (SSPSLASSTLNEVNTSSTISC) are compositionally biased toward polar residues. Positions 1065–1075 (PQEEPEPEPEP) are enriched in acidic residues. Pro residues predominate over residues 1076–1086 (QPEPQVVPEPP).

Belongs to the protein kinase superfamily. Tyr protein kinase family. CSF-1/PDGF receptor subfamily. Interacts with homodimeric PDGFB and PDGFD, and with heterodimers formed by PDGFA and PDGFB. May also interact with homodimeric PDGFC. Monomer in the absence of bound ligand. Interaction with homodimeric PDGFB, heterodimers formed by PDGFA and PDGFB or homodimeric PDGFD, leads to receptor dimerization, where both PDGFRA homodimers and heterodimers with PDGFRB are observed. Interacts with SH2B2/APS. Interacts directly (tyrosine phosphorylated) with SHB. Interacts (tyrosine phosphorylated) with PIK3R1 and RASA1. Interacts (tyrosine phosphorylated) with CBL. Interacts (tyrosine phosphorylated) with SRC and SRC family kinases. Interacts (tyrosine phosphorylated) with PIK3C2B, maybe indirectly. Interacts (tyrosine phosphorylated) with SHC1, GRB7, GRB10 and NCK1. Interaction with GRB2 is mediated by SHC1. Interacts (via C-terminus) with NHERF1. In terms of processing, N-glycosylated. Ubiquitinated. After autophosphorylation, the receptor is polyubiquitinated, leading to its degradation. Post-translationally, autophosphorylated on tyrosine residues upon ligand binding. Autophosphorylation occurs in trans, i.e. one subunit of the dimeric receptor phosphorylates tyrosine residues on the other subunit. Phosphorylation at Tyr-579, and to a lesser degree, Tyr-581 is important for interaction with SRC. Phosphorylation at Tyr-716 is important for interaction with GRB2. Phosphorylation at Tyr-740 and Tyr-751 is important for interaction with PIK3R1. Phosphorylation at Tyr-751 is important for interaction with NCK1. Phosphorylation at Tyr-771 and Tyr-857 is important for interaction with RASA1/GAP. Phosphorylation at Tyr-857 is important for efficient phosphorylation of PLCG1 and PTPN11, resulting in increased phosphorylation of AKT1, MAPK1/ERK2 and/or MAPK3/ERK1, PDCD6IP/ALIX and STAM, and in increased cell proliferation. Phosphorylation at Tyr-1009 is important for interaction with PTPN11. Phosphorylation at Tyr-1009 and Tyr-1021 is important for interaction with PLCG1. Dephosphorylated by PTPRJ at Tyr-751, Tyr-857, Tyr-1009 and Tyr-1021. Dephosphorylated by PTPN2 at Tyr-579 and Tyr-1021.

It is found in the cell membrane. It localises to the cytoplasmic vesicle. The protein resides in the lysosome lumen. The enzyme catalyses L-tyrosyl-[protein] + ATP = O-phospho-L-tyrosyl-[protein] + ADP + H(+). With respect to regulation, present in an inactive conformation in the absence of bound ligand. Binding of PDGFB and/or PDGFD leads to dimerization and activation by autophosphorylation on tyrosine residues. Its function is as follows. Tyrosine-protein kinase that acts as a cell-surface receptor for homodimeric PDGFB and PDGFD and for heterodimers formed by PDGFA and PDGFB, and plays an essential role in the regulation of embryonic development, cell proliferation, survival, differentiation, chemotaxis and migration. Plays an essential role in blood vessel development by promoting proliferation, migration and recruitment of pericytes and smooth muscle cells to endothelial cells. Plays a role in the migration of vascular smooth muscle cells and the formation of neointima at vascular injury sites. Required for normal development of the cardiovascular system. Required for normal recruitment of pericytes (mesangial cells) in the kidney glomerulus, and for normal formation of a branched network of capillaries in kidney glomeruli. Promotes rearrangement of the actin cytoskeleton and the formation of membrane ruffles. Binding of its cognate ligands - homodimeric PDGFB, heterodimers formed by PDGFA and PDGFB or homodimeric PDGFD -leads to the activation of several signaling cascades; the response depends on the nature of the bound ligand and is modulated by the formation of heterodimers between PDGFRA and PDGFRB. Phosphorylates PLCG1, PIK3R1, PTPN11, RASA1/GAP, CBL, SHC1 and NCK1. Activation of PLCG1 leads to the production of the cellular signaling molecules diacylglycerol and inositol 1,4,5-trisphosphate, mobilization of cytosolic Ca(2+) and the activation of protein kinase C. Phosphorylation of PIK3R1, the regulatory subunit of phosphatidylinositol 3-kinase, leads to the activation of the AKT1 signaling pathway. Phosphorylation of SHC1, or of the C-terminus of PTPN11, creates a binding site for GRB2, resulting in the activation of HRAS, RAF1 and down-stream MAP kinases, including MAPK1/ERK2 and/or MAPK3/ERK1. Promotes phosphorylation and activation of SRC family kinases. Promotes phosphorylation of PDCD6IP/ALIX and STAM. Receptor signaling is down-regulated by protein phosphatases that dephosphorylate the receptor and its down-stream effectors, and by rapid internalization of the activated receptor. The protein is Platelet-derived growth factor receptor beta (PDGFRB) of Canis lupus familiaris (Dog).